Here is a 260-residue protein sequence, read N- to C-terminus: Small ribosomal subunit protein uS2 (260 aa).

Residues 223–260 (EGRQGEDEEEASQEVAEGVSKDSLEDLKKSVEEGSNEE) form a disordered region. Residues 241-254 (VSKDSLEDLKKSVE) are compositionally biased toward basic and acidic residues.

It belongs to the universal ribosomal protein uS2 family.

The chain is Small ribosomal subunit protein uS2 from Pediococcus pentosaceus (strain ATCC 25745 / CCUG 21536 / LMG 10740 / 183-1w).